The primary structure comprises 89 residues: UPF0213 protein HQ_3675A (89 aa).

A GIY-YIG domain is found at D3–Q78.

Belongs to the UPF0213 family.

The sequence is that of UPF0213 protein HQ_3675A from Haloquadratum walsbyi (strain DSM 16790 / HBSQ001).